The primary structure comprises 240 residues: MNESERKIVEEFQKKTGINFKNEELLFRALCHSSYANEQNQAGRKNVESNEKLEFLGDAVLELFVCEILYKKYPEAEVGDLARVKSAAASEEVLALVSRKMNLGKFLFLGKGEEKTGGRDRDSILADAFEALLAAIYLDQGYEKIKELFEQEFEFYIEKIMKGEMLFDYKTALQEIVQSEHKVPPEYVLVRTEKNDGDRIFVVEVRVDGKTIATGRGRTKKEAEKEAARIAYEKLLKERA.

The RNase III domain occupies valine 9–glycine 141. Glutamate 54 contacts Mg(2+). Aspartate 58 is a catalytic residue. Residues aspartate 127 and glutamate 130 each contribute to the Mg(2+) site. The active site involves glutamate 130. The region spanning aspartate 168 to lysine 237 is the DRBM domain.

It belongs to the ribonuclease III family. As to quaternary structure, homodimer. The cofactor is Mg(2+).

The protein resides in the cytoplasm. It carries out the reaction Endonucleolytic cleavage to 5'-phosphomonoester.. Its function is as follows. Digests double-stranded RNA. Involved in the processing of primary rRNA transcript to yield the immediate precursors to the large and small rRNAs (23S and 16S). Processes some mRNAs, and tRNAs when they are encoded in the rRNA operon. Processes pre-crRNA and tracrRNA of type II CRISPR loci if present in the organism. The chain is Ribonuclease 3 from Thermotoga sp. (strain RQ2).